The chain runs to 156 residues: Small ribosomal subunit protein uS7 (156 aa).

The protein belongs to the universal ribosomal protein uS7 family. Part of the 30S ribosomal subunit. Contacts proteins S9 and S11.

One of the primary rRNA binding proteins, it binds directly to 16S rRNA where it nucleates assembly of the head domain of the 30S subunit. Is located at the subunit interface close to the decoding center, probably blocks exit of the E-site tRNA. The sequence is that of Small ribosomal subunit protein uS7 from Nitratidesulfovibrio vulgaris (strain DSM 19637 / Miyazaki F) (Desulfovibrio vulgaris).